A 294-amino-acid polypeptide reads, in one-letter code: Flagellin B1 (294 aa).

A propeptide spanning residues 1–8 (MKTRTRKG) is cleaved from the precursor.

This sequence belongs to the archaeal flagellin family.

Its subcellular location is the archaeal flagellum. Its function is as follows. Flagellin is the subunit protein which polymerizes to form the filaments of archaeal flagella. In Thermococcus kodakarensis (strain ATCC BAA-918 / JCM 12380 / KOD1) (Pyrococcus kodakaraensis (strain KOD1)), this protein is Flagellin B1 (flaB1).